Here is a 169-residue protein sequence, read N- to C-terminus: Cell division inhibitor SulA (169 aa).

The tract at residues 106 to 112 is ftsZ binding; that stretch reads ALRTGNY. The segment at 162-169 is lon protease binding; sequence KIHSNLYH.

The protein belongs to the SulA family. In terms of assembly, interacts with FtsZ. Post-translationally, is rapidly cleaved and degraded by the Lon protease once DNA damage is repaired.

In terms of biological role, component of the SOS system and an inhibitor of cell division. Accumulation of SulA causes rapid cessation of cell division and the appearance of long, non-septate filaments. In the presence of GTP, binds a polymerization-competent form of FtsZ in a 1:1 ratio, thus inhibiting FtsZ polymerization and therefore preventing it from participating in the assembly of the Z ring. This mechanism prevents the premature segregation of damaged DNA to daughter cells during cell division. The polypeptide is Cell division inhibitor SulA (Salmonella dublin (strain CT_02021853)).